The primary structure comprises 391 residues: ATP phosphoribosyltransferase regulatory subunit (391 aa).

The protein belongs to the class-II aminoacyl-tRNA synthetase family. HisZ subfamily. As to quaternary structure, heteromultimer composed of HisG and HisZ subunits.

The protein localises to the cytoplasm. Its pathway is amino-acid biosynthesis; L-histidine biosynthesis; L-histidine from 5-phospho-alpha-D-ribose 1-diphosphate: step 1/9. Functionally, required for the first step of histidine biosynthesis. May allow the feedback regulation of ATP phosphoribosyltransferase activity by histidine. This is ATP phosphoribosyltransferase regulatory subunit from Bacillus pumilus (strain SAFR-032).